A 266-amino-acid chain; its full sequence is Electron transfer flavoprotein subunit beta (266 aa).

This sequence belongs to the ETF beta-subunit/FixA family. As to quaternary structure, heterodimer of an alpha and a beta subunit. It depends on FAD as a cofactor. AMP serves as cofactor.

The electron transfer flavoprotein serves as a specific electron acceptor for other dehydrogenases. It transfers the electrons to the main respiratory chain via ETF-ubiquinone oxidoreductase (ETF dehydrogenase). The protein is Electron transfer flavoprotein subunit beta (etfB) of Mycobacterium leprae (strain TN).